Consider the following 33-residue polypeptide: Phospholipase A2 homolog BmarPLA2 (33 aa).

It belongs to the phospholipase A2 family. Group II subfamily. K49 sub-subfamily. Homodimer; non-covalently linked. Expressed by the venom gland.

It is found in the secreted. Functionally, snake phospholipase A2 homolog that lacks enzymatic activity. May display myotoxin activity. In isolated heart decreases cardiac frequency. Also decreases mean arterial pressure. Does not show antimicrobial activity. Does not change renal parameters (such as perfusion pressure, renal vascular resistance, urinary flow, glomerular filtration rate and sodium tubular transport). The sequence is that of Phospholipase A2 homolog BmarPLA2 from Bothrops marajoensis (Marajo lancehead).